The primary structure comprises 365 residues: Aminomethyltransferase (365 aa).

The protein belongs to the GcvT family. The glycine cleavage system is composed of four proteins: P, T, L and H.

The enzyme catalyses N(6)-[(R)-S(8)-aminomethyldihydrolipoyl]-L-lysyl-[protein] + (6S)-5,6,7,8-tetrahydrofolate = N(6)-[(R)-dihydrolipoyl]-L-lysyl-[protein] + (6R)-5,10-methylene-5,6,7,8-tetrahydrofolate + NH4(+). Functionally, the glycine cleavage system catalyzes the degradation of glycine. The protein is Aminomethyltransferase of Chlorobium phaeobacteroides (strain DSM 266 / SMG 266 / 2430).